We begin with the raw amino-acid sequence, 171 residues long: Co-chaperone protein HscB homolog (171 aa).

The J domain maps to 2–74; sequence NHFELFGLPS…ISRAEYILAE (73 aa).

The protein belongs to the HscB family. Interacts with HscA and stimulates its ATPase activity.

Co-chaperone involved in the maturation of iron-sulfur cluster-containing proteins. Seems to help targeting proteins to be folded toward HscA. The protein is Co-chaperone protein HscB homolog of Vibrio campbellii (strain ATCC BAA-1116).